Consider the following 328-residue polypeptide: Phenylalanine--tRNA ligase alpha subunit (328 aa).

A Mg(2+)-binding site is contributed by Glu-245.

This sequence belongs to the class-II aminoacyl-tRNA synthetase family. Phe-tRNA synthetase alpha subunit type 1 subfamily. Tetramer of two alpha and two beta subunits. Mg(2+) serves as cofactor.

The protein resides in the cytoplasm. The enzyme catalyses tRNA(Phe) + L-phenylalanine + ATP = L-phenylalanyl-tRNA(Phe) + AMP + diphosphate + H(+). The polypeptide is Phenylalanine--tRNA ligase alpha subunit (Helicobacter pylori (strain HPAG1)).